A 420-amino-acid polypeptide reads, in one-letter code: Sulfate adenylyltransferase (420 aa).

The protein belongs to the sulfate adenylyltransferase family.

It catalyses the reaction sulfate + ATP + H(+) = adenosine 5'-phosphosulfate + diphosphate. The protein operates within sulfur metabolism; hydrogen sulfide biosynthesis; sulfite from sulfate: step 1/3. This is Sulfate adenylyltransferase from Desulforudis audaxviator (strain MP104C).